A 206-amino-acid chain; its full sequence is Insecticyanin-B (206 aa).

The first 17 residues, 1–17 (MQRFLVFTIVAVATAAA), serve as a signal peptide directing secretion. 2 disulfide bridges follow: C26–C136 and C60–C192.

It belongs to the calycin superfamily. Lipocalin family. In terms of assembly, homotetramer. In terms of tissue distribution, synthesized only in the caterpillars, apparently by the epidermis and secreted into the hemolymph. The protein is passed over from the larval hemolymph to that of pupae and adults and is sequestered in the eggs.

It is found in the secreted. In terms of biological role, this protein binds a chromophore: biliverdin IX, isomer gamma. Mixed with lipoprotein-bound carotenes, this blue protein provides hornworms with their green cryptic coloration which serves a camouflage. This is Insecticyanin-B (INSB) from Manduca sexta (Tobacco hawkmoth).